Here is a 425-residue protein sequence, read N- to C-terminus: MLLNKGLLASLLAYTTTAFDLQHIFYKEQYSCPISLPASCSNNTEIKDSCCFEFPGGIMLQTQFWDYIPPKGVSDPDELVRHLGPLDSFTNHGLWPDNCDGTYAQFCNRESNIDDVWHLLNDDQFNGRDDLPINGTDLLETMDMYWKSNTGDDESLWVHEYNKHGTCIRTLYPDCYKKWGVAGNSKKQAVYDYFRIAMKLFHDKDTYQTLKSAGIEPSVEKSYTKLEISNALKEGHSGEVVHFLCDRHGSLNQIWYFHSLKGSLLGEKFVPISALPKGSNCPDDNIKWYPKGHVPSSYRPPNGNHPGTRGVVRIGNGKGFLIKNGHWYLKGTPANFFLIEAPFGNYYLKTRMGYCGIDNSNKVLACNKNVAQAAQFEYDAKKGYIGYNGAYDWYATKYPRGNQQAPVYAGSNDDGYNFQLKFVKA.

Positions 1-18 (MLLNKGLLASLLAYTTTA) are cleaved as a signal peptide. Intrachain disulfides connect C32–C51, C40–C99, C50–C175, C107–C167, and C245–C281. A glycan (N-linked (GlcNAc...) asparagine) is linked at N42. H92 is an active-site residue. The N-linked (GlcNAc...) asparagine glycan is linked to N134. Residues E160 and H164 contribute to the active site.

The protein belongs to the RNase T2 family.

It is found in the vacuole lumen. The protein resides in the cytoplasm. It carries out the reaction a ribonucleotidyl-ribonucleotide-RNA + H2O = a 3'-end 3'-phospho-ribonucleotide-RNA + a 5'-end dephospho-ribonucleoside-RNA + H(+). Functionally, rnase which modulates cell survival under stress conditions. Released from the vacuole to the cytoplasm during stress to promote tRNA and rRNA cleavage and to activate separately a downstream pathway that promotes cell death. Involved in cell size, vacuolar morphology and growth at high temperatures and high salt concentration. In Kluyveromyces lactis (strain ATCC 8585 / CBS 2359 / DSM 70799 / NBRC 1267 / NRRL Y-1140 / WM37) (Yeast), this protein is Ribonuclease T2-like (RNY1).